The primary structure comprises 419 residues: Probable 3-isopropylmalate dehydratase large subunit (419 aa).

Residues Cys299, Cys359, and Cys362 each contribute to the [4Fe-4S] cluster site.

This sequence belongs to the aconitase/IPM isomerase family. LeuC type 2 subfamily. In terms of assembly, heterodimer of LeuC and LeuD. [4Fe-4S] cluster serves as cofactor.

The catalysed reaction is (2R,3S)-3-isopropylmalate = (2S)-2-isopropylmalate. The protein operates within amino-acid biosynthesis; L-leucine biosynthesis; L-leucine from 3-methyl-2-oxobutanoate: step 2/4. In terms of biological role, catalyzes the isomerization between 2-isopropylmalate and 3-isopropylmalate, via the formation of 2-isopropylmaleate. The sequence is that of Probable 3-isopropylmalate dehydratase large subunit from Methanothermobacter thermautotrophicus (strain ATCC 29096 / DSM 1053 / JCM 10044 / NBRC 100330 / Delta H) (Methanobacterium thermoautotrophicum).